The sequence spans 740 residues: Elongation factor 2 (740 aa).

The region spanning 23 to 264 (AQIRNAGTLA…MIIEHVPPPN (242 aa)) is the tr-type G domain. GTP contacts are provided by residues 32–39 (AHVDHGKT), 98–102 (DTPGH), and 152–155 (NKID). At histidine 605 the chain carries Diphthamide.

It belongs to the TRAFAC class translation factor GTPase superfamily. Classic translation factor GTPase family. EF-G/EF-2 subfamily.

It is found in the cytoplasm. Catalyzes the GTP-dependent ribosomal translocation step during translation elongation. During this step, the ribosome changes from the pre-translocational (PRE) to the post-translocational (POST) state as the newly formed A-site-bound peptidyl-tRNA and P-site-bound deacylated tRNA move to the P and E sites, respectively. Catalyzes the coordinated movement of the two tRNA molecules, the mRNA and conformational changes in the ribosome. The polypeptide is Elongation factor 2 (Pyrobaculum calidifontis (strain DSM 21063 / JCM 11548 / VA1)).